The primary structure comprises 242 residues: DNA repair protein RecO (242 aa).

The protein belongs to the RecO family.

Functionally, involved in DNA repair and RecF pathway recombination. This Paracoccus denitrificans (strain Pd 1222) protein is DNA repair protein RecO.